We begin with the raw amino-acid sequence, 272 residues long: Magnetosome protein MamQ 1 (272 aa).

Over 1–46 (MALGDANVGSAPGVDFSALQRVKQSEELLAQLYVVEETPRRLGRGP) the chain is Cytoplasmic. The chain crosses the membrane as a helical span at residues 47–67 (VHALMVISVLSVVAFIATLLM). The Lumenal segment spans residues 68 to 272 (RYNTFVTMSE…PLNHAQDIKK (205 aa)).

The protein belongs to the LemA family.

It localises to the magnetosome membrane. Essential for magnetosome formation. Can be used to induce magnetosome formation. The chain is Magnetosome protein MamQ 1 (mamQ1) from Paramagnetospirillum magneticum (strain ATCC 700264 / AMB-1) (Magnetospirillum magneticum).